We begin with the raw amino-acid sequence, 376 residues long: Polygalacturonase (376 aa).

An N-terminal signal peptide occupies residues 1-20 (MASSLKLGLIALLGATAVNA). A disulfide bridge connects residues Cys-39 and Cys-57. A PbH1 1 repeat occupies 170–208 (AKELTLSGITVDTADGDSNGGHNTDAFDVGSSNGVYITS). The active-site Proton donor is the Asp-215. Residues Cys-217 and Cys-233 are joined by a disulfide bond. PbH1 repeat units follow at residues 223–243 (GTNV…SIGS), 252–273 (VDGV…RIKT), 281–303 (VQGV…VIEQ), and 315–360 (TSGV…SITG). Residue His-237 is part of the active site. Intrachain disulfides connect Cys-343–Cys-348 and Cys-367–Cys-376.

The protein belongs to the glycosyl hydrolase 28 family.

Its subcellular location is the secreted. The catalysed reaction is (1,4-alpha-D-galacturonosyl)n+m + H2O = (1,4-alpha-D-galacturonosyl)n + (1,4-alpha-D-galacturonosyl)m.. The protein is Polygalacturonase (PGG1) of Penicillium griseoroseum.